The primary structure comprises 35 residues: Dermonecrotic toxin LgSicTox-beta-LOXN4 (35 aa).

Aspartate 20 provides a ligand contact to Mg(2+).

The protein belongs to the arthropod phospholipase D family. Class II subfamily. Mg(2+) serves as cofactor. Contains 2 disulfide bonds. As to expression, expressed by the venom gland.

The protein resides in the secreted. The enzyme catalyses an N-(acyl)-sphingosylphosphocholine = an N-(acyl)-sphingosyl-1,3-cyclic phosphate + choline. It catalyses the reaction an N-(acyl)-sphingosylphosphoethanolamine = an N-(acyl)-sphingosyl-1,3-cyclic phosphate + ethanolamine. It carries out the reaction a 1-acyl-sn-glycero-3-phosphocholine = a 1-acyl-sn-glycero-2,3-cyclic phosphate + choline. The catalysed reaction is a 1-acyl-sn-glycero-3-phosphoethanolamine = a 1-acyl-sn-glycero-2,3-cyclic phosphate + ethanolamine. Dermonecrotic toxins cleave the phosphodiester linkage between the phosphate and headgroup of certain phospholipids (sphingolipid and lysolipid substrates), forming an alcohol (often choline) and a cyclic phosphate. This toxin acts on sphingomyelin (SM). It may also act on ceramide phosphoethanolamine (CPE), lysophosphatidylcholine (LPC) and lysophosphatidylethanolamine (LPE), but not on lysophosphatidylserine (LPS), and lysophosphatidylglycerol (LPG). It acts by transphosphatidylation, releasing exclusively cyclic phosphate products as second products. Induces dermonecrosis, hemolysis, increased vascular permeability, edema, inflammatory response, and platelet aggregation. The chain is Dermonecrotic toxin LgSicTox-beta-LOXN4 from Loxosceles gaucho (Spider).